Reading from the N-terminus, the 102-residue chain is Hypersensitivity to hygromycin-B protein 1 (102 aa).

Residues 1–17 (MSLSFLLFSPFLPPCFS) form the signal peptide. A helical membrane pass occupies residues 18 to 38 (SISICLSVLSTVSFFFAFTIP). Topologically, residues 39-69 (HYVLRCGSVDEWHIHSSAEDFRTQRCVCAVK) are cytoplasmic. Residues 70 to 90 (LSASLLGCLLACASWSLLLEV) traverse the membrane as a helical segment. The Extracellular portion of the chain corresponds to 91-102 (SRIKWHVGTAYS).

It localises to the membrane. In terms of biological role, involved in vacuolar trafficking. This Saccharomyces cerevisiae (strain ATCC 204508 / S288c) (Baker's yeast) protein is Hypersensitivity to hygromycin-B protein 1.